The primary structure comprises 437 residues: Probable glycine dehydrogenase (decarboxylating) subunit 1 (437 aa).

Belongs to the GcvP family. N-terminal subunit subfamily. In terms of assembly, the glycine cleavage system is composed of four proteins: P, T, L and H. In this organism, the P 'protein' is a heterodimer of two subunits.

It carries out the reaction N(6)-[(R)-lipoyl]-L-lysyl-[glycine-cleavage complex H protein] + glycine + H(+) = N(6)-[(R)-S(8)-aminomethyldihydrolipoyl]-L-lysyl-[glycine-cleavage complex H protein] + CO2. In terms of biological role, the glycine cleavage system catalyzes the degradation of glycine. The P protein binds the alpha-amino group of glycine through its pyridoxal phosphate cofactor; CO(2) is released and the remaining methylamine moiety is then transferred to the lipoamide cofactor of the H protein. In Thermotoga petrophila (strain ATCC BAA-488 / DSM 13995 / JCM 10881 / RKU-1), this protein is Probable glycine dehydrogenase (decarboxylating) subunit 1.